A 928-amino-acid polypeptide reads, in one-letter code: G-protein coupled receptor family C group 6 member A (928 aa).

A signal peptide spans 1–20 (MALSFVFITCFMILLDTSQS). At 21–594 (CHTPDDFVAI…EYLDWDDSLA (574 aa)) the chain is on the extracellular side. N-linked (GlcNAc...) asparagine glycosylation is found at asparagine 332 and asparagine 555. Residues 595–615 (LLLIALSLLGIAFVLAVGIIF) traverse the membrane as a helical segment. Residues 616–630 (TRNLKTPVVKSSGGL) lie on the Cytoplasmic side of the membrane. Residues 631–651 (VVCYVMLACHALNFASTGFFI) traverse the membrane as a helical segment. At 652 to 669 (GEPQDFTCKTRQTLFGVS) the chain is on the extracellular side. A helical transmembrane segment spans residues 670-690 (FTLCVSCILTKSLKILLAFSF). Topologically, residues 691-706 (DPTLKTFLKCLYRPVP) are cytoplasmic. A helical transmembrane segment spans residues 707–727 (IVLTCTGIQVVICTLWLVLAA). Residues 728 to 750 (PTVEENTSLPRVIILECEEGSAL) lie on the Extracellular side of the membrane. The chain crosses the membrane as a helical span at residues 751 to 771 (AFGTMLGYIAVLAFICFVFAF). Residues 772 to 784 (KGRKLPENYNEAK) lie on the Cytoplasmic side of the membrane. A helical membrane pass occupies residues 785–805 (FLTFGMLIYFIAWITFIPVYA). At 806–812 (TTFGKYL) the chain is on the extracellular side. Residues 813–833 (PAVEIIVILISNYGILCCTFF) form a helical membrane-spanning segment. The Cytoplasmic portion of the chain corresponds to 834 to 928 (PKCYIILCKQ…TLHQKRSSSI (95 aa)).

The protein belongs to the G-protein coupled receptor 3 family. As to quaternary structure, homodimer; disulfide-linked. N-glycosylated. In terms of tissue distribution, high expression in soft palate. Weak expression in kidney, liver, lung and brain. No expression detected in heart, testis, skeletal muscle amd spleen.

It is found in the cell membrane. In terms of biological role, receptor activated by multiple ligands, including osteocalcin (BGLAP), basic amino acids, and various cations. Activated by amino acids with a preference for basic amino acids such as L-Lys, L-Arg and L-ornithine but also by small and polar amino acids. The L-alpha amino acids respond is augmented by divalent cations Ca(2+) and Mg(2+). Seems to act through a G(q)/G(11) and G(i)-coupled pathway. Regulates testosterone production by acting as a ligand for uncarboxylated osteocalcin hormone: osteocalcin-binding at the surface of Leydig cells initiates a signaling response that promotes the expression of enzymes required for testosterone synthesis in a CREB-dependent manner. Mediates the non-genomic effects of androgens in multiple tissue. May coordinate nutritional and hormonal anabolic signals through the sensing of extracellular amino acids, osteocalcin, divalent ions and its responsiveness to anabolic steroids. This chain is G-protein coupled receptor family C group 6 member A (Gprc6a), found in Rattus norvegicus (Rat).